We begin with the raw amino-acid sequence, 570 residues long: MSDFEDNNPFAGADRRDSVSSDATDDGPSASFLATNTTNDFGGASFMAGGGSFYGAASQIGGLGGMGMSAYDPESALANPFDDGSNSFSATPTASITNQNDTAHEATNERTTTASQSNIPPIEIIEANKNHEGTSRGFITYTIRVGDVSVRRRYSEFESLRTTLTRMFPTLIVPPIPEKHSITDYAVAPTKAREDKDMIEHRQRMLQVFLNRCRNLPQISNCIVFQRFLDPHASWSEVLNSPPVSTLPRYSLRAPPVDPSNNVTEAHSYLPIPSANGVVRNRGGDEEGKQEAFFAEAEKTAKEYEAVIGGGLEKVARRILKRYTDIAGDYAELGGRFNALSLEESDSRMAATVEKVGQAIDSNYLATNHLVRELGRQFGEPLAESAQFSGVVRSVLKYRKQKALQLELTSDSLEAKRVTLASLESAEADSQRINDALGRTRSNNGPSTTNSGEQPSASPAPKKSSGFKIPGLSSLNSAFNNMMDADPEASRRQGIGKTREQIGQLEQALEVAQKDIVVANESVEKDLERFRAEREADLKCMIRAFLKCHIDWAKQNLDTWQSAQAEVESM.

2 disordered regions span residues 1 to 31 and 81 to 115; these read MSDF…PSAS and FDDG…TTAS. The segment covering 84–101 has biased composition (polar residues); that stretch reads GSNSFSATPTASITNQND. The PX domain occupies 98–236; sequence NQNDTAHEAT…RFLDPHASWS (139 aa). Residues Arg153, Ser155, Lys179, and Arg202 each contribute to the a 1,2-diacyl-sn-glycero-3-phospho-(1D-myo-inositol-3-phosphate) site. Residues 429-498 form a disordered region; the sequence is DSQRINDALG…ASRRQGIGKT (70 aa). Polar residues predominate over residues 440 to 454; sequence TRSNNGPSTTNSGEQ. Residues 455 to 464 are compositionally biased toward low complexity; that stretch reads PSASPAPKKS.

Belongs to the sorting nexin family.

The protein resides in the endosome membrane. The protein localises to the endomembrane system. Functionally, may be required for cytoplasm to vacuole transport (Cvt) and pexophagy. The sequence is that of Sorting nexin-41 (SNX41) from Yarrowia lipolytica (strain CLIB 122 / E 150) (Yeast).